The primary structure comprises 140 residues: 3-hydroxyacyl-[acyl-carrier-protein] dehydratase FabZ (140 aa).

Histidine 47 is a catalytic residue.

The protein belongs to the thioester dehydratase family. FabZ subfamily.

The protein localises to the cytoplasm. It catalyses the reaction a (3R)-hydroxyacyl-[ACP] = a (2E)-enoyl-[ACP] + H2O. Involved in unsaturated fatty acids biosynthesis. Catalyzes the dehydration of short chain beta-hydroxyacyl-ACPs and long chain saturated and unsaturated beta-hydroxyacyl-ACPs. The polypeptide is 3-hydroxyacyl-[acyl-carrier-protein] dehydratase FabZ (Streptococcus pneumoniae (strain 70585)).